We begin with the raw amino-acid sequence, 309 residues long: Serine/threonine-protein phosphatase 2A catalytic subunit alpha isoform (309 aa).

4 residues coordinate Mn(2+): Asp57, His59, Asp85, and Asn117. Residues Asp57, His59, and Asp85 each coordinate Zn(2+). Positions 85 and 117 each coordinate Fe(3+). The active-site Proton donor is His118. Mn(2+)-binding residues include His167 and His241. The Fe(3+) site is built by His167 and His241. At Tyr307 the chain carries Phosphotyrosine. Leu309 is modified (leucine methyl ester).

It belongs to the PPP phosphatase family. PP-1 subfamily. As to quaternary structure, PP2A consists of a common heterodimeric core enzyme, composed of PPP2CA, a 36 kDa catalytic subunit (subunit C), and PPP2R1A, a 65 kDa constant regulatory subunit (PR65 or subunit A), that associates with a variety of regulatory subunits. Proteins that associate with the core dimer include three families of regulatory subunits B (the R2/B/PR55/B55, R3/B''/PR72/PR130/PR59 and R5/B'/B56 families), the 48 kDa variable regulatory subunit, viral proteins, and cell signaling molecules. May indirectly interact with SGOL1, most probably through regulatory B56 subunits. Phosphatase component of the Integrator-PP2A (INTAC) complex, composed of the Integrator core complex and protein phosphatase 2A subunits PPP2CA and PPP2R1A. The cofactor is Mn(2+). Requires Fe(3+) as cofactor. It depends on Zn(2+) as a cofactor. Post-translationally, reversibly methyl esterified on Leu-309 by leucine carboxyl methyltransferase 1 (LCMT1) and protein phosphatase methylesterase 1 (PPME1). Carboxyl methylation influences the affinity of the catalytic subunit for the different regulatory subunits, thereby modulating the PP2A holoenzyme's substrate specificity, enzyme activity and cellular localization. In terms of processing, phosphorylation of either threonine (by autophosphorylation-activated protein kinase) or tyrosine results in inactivation of the phosphatase. Auto-dephosphorylation has been suggested as a mechanism for reactivation.

It is found in the cytoplasm. It localises to the nucleus. Its subcellular location is the chromosome. The protein resides in the centromere. The protein localises to the cytoskeleton. It is found in the spindle pole. The catalysed reaction is O-phospho-L-seryl-[protein] + H2O = L-seryl-[protein] + phosphate. The enzyme catalyses O-phospho-L-threonyl-[protein] + H2O = L-threonyl-[protein] + phosphate. Inhibited by the interaction between PPP2R2A and ARPP19; this inhibition is enhanced when ARPP19 is phosphorylated. Inhibited by the interaction between PPP2R2A and PABIR1/FAM122A. In terms of biological role, PP2A is the major phosphatase for microtubule-associated proteins (MAPs). PP2A can modulate the activity of phosphorylase B kinase casein kinase 2, mitogen-stimulated S6 kinase, and MAP-2 kinase. Key mediator of a quality checkpoint during transcription elongation as part of the Integrator-PP2A (INTAC) complex. The INTAC complex drives premature transcription termination of transcripts that are unfavorably configured for transcriptional elongation: within the INTAC complex, PPP2CA catalyzes dephosphorylation of the C-terminal domain (CTD) of Pol II subunit POLR2A/RPB1 and SUPT5H/SPT5, thereby preventing transcriptional elongation. The polypeptide is Serine/threonine-protein phosphatase 2A catalytic subunit alpha isoform (PPP2CA) (Gallus gallus (Chicken)).